Consider the following 335-residue polypeptide: Nod factor export ATP-binding protein I (335 aa).

Residues 37-267 enclose the ABC transporter domain; sequence IDVASVTKSY…KIGCQVIEIY (231 aa). 69 to 76 contacts ATP; sequence GPNGAGKS.

It belongs to the ABC transporter superfamily. Lipooligosaccharide exporter (TC 3.A.1.102) family. As to quaternary structure, the complex is composed of two ATP-binding proteins (NodI) and two transmembrane proteins (NodJ).

The protein resides in the cell inner membrane. Part of the ABC transporter complex NodIJ involved in the export of the nodulation factors (Nod factors), the bacterial signal molecules that induce symbiosis and subsequent nodulation induction. Nod factors are LCO (lipo-chitin oligosaccharide), a modified beta-1,4-linked N-acetylglucosamine oligosaccharide. This subunit is responsible for energy coupling to the transport system. This is Nod factor export ATP-binding protein I from Rhizobium meliloti (strain 1021) (Ensifer meliloti).